Consider the following 184-residue polypeptide: NADH-quinone oxidoreductase subunit B 2 (184 aa).

[4Fe-4S] cluster is bound by residues Cys-59, Cys-60, Cys-125, and Cys-153.

The protein belongs to the complex I 20 kDa subunit family. As to quaternary structure, NDH-1 is composed of 14 different subunits. Subunits NuoB, C, D, E, F, and G constitute the peripheral sector of the complex. [4Fe-4S] cluster is required as a cofactor.

The protein localises to the cell inner membrane. It catalyses the reaction a quinone + NADH + 5 H(+)(in) = a quinol + NAD(+) + 4 H(+)(out). NDH-1 shuttles electrons from NADH, via FMN and iron-sulfur (Fe-S) centers, to quinones in the respiratory chain. Couples the redox reaction to proton translocation (for every two electrons transferred, four hydrogen ions are translocated across the cytoplasmic membrane), and thus conserves the redox energy in a proton gradient. The polypeptide is NADH-quinone oxidoreductase subunit B 2 (Solibacter usitatus (strain Ellin6076)).